The sequence spans 364 residues: Chorismate synthase (364 aa).

2 residues coordinate NADP(+): Arg-48 and Arg-54. Residues 125–127 (RSS), Gly-282, 297–301 (KPPAS), and Arg-323 each bind FMN.

Belongs to the chorismate synthase family. As to quaternary structure, homotetramer. FMNH2 serves as cofactor.

It catalyses the reaction 5-O-(1-carboxyvinyl)-3-phosphoshikimate = chorismate + phosphate. The protein operates within metabolic intermediate biosynthesis; chorismate biosynthesis; chorismate from D-erythrose 4-phosphate and phosphoenolpyruvate: step 7/7. Catalyzes the anti-1,4-elimination of the C-3 phosphate and the C-6 proR hydrogen from 5-enolpyruvylshikimate-3-phosphate (EPSP) to yield chorismate, which is the branch point compound that serves as the starting substrate for the three terminal pathways of aromatic amino acid biosynthesis. This reaction introduces a second double bond into the aromatic ring system. The polypeptide is Chorismate synthase (Chloroflexus aurantiacus (strain ATCC 29366 / DSM 635 / J-10-fl)).